The sequence spans 156 residues: Small ribosomal subunit protein uS7 (156 aa).

It belongs to the universal ribosomal protein uS7 family. As to quaternary structure, part of the 30S ribosomal subunit. Contacts proteins S9 and S11.

One of the primary rRNA binding proteins, it binds directly to 16S rRNA where it nucleates assembly of the head domain of the 30S subunit. Is located at the subunit interface close to the decoding center, probably blocks exit of the E-site tRNA. This is Small ribosomal subunit protein uS7 from Phytoplasma australiense.